The chain runs to 963 residues: Isoleucine--tRNA ligase (963 aa).

The 'HIGH' region motif lies at 66-76; it reads PYANGDIHIGH. Glutamate 596 contacts L-isoleucyl-5'-AMP. The 'KMSKS' region motif lies at 637–641; sequence KMSKS. An ATP-binding site is contributed by lysine 640. The Zn(2+) site is built by cysteine 926, cysteine 929, cysteine 946, and cysteine 949.

The protein belongs to the class-I aminoacyl-tRNA synthetase family. IleS type 1 subfamily. In terms of assembly, monomer. Zn(2+) serves as cofactor.

Its subcellular location is the cytoplasm. It carries out the reaction tRNA(Ile) + L-isoleucine + ATP = L-isoleucyl-tRNA(Ile) + AMP + diphosphate. Its function is as follows. Catalyzes the attachment of isoleucine to tRNA(Ile). As IleRS can inadvertently accommodate and process structurally similar amino acids such as valine, to avoid such errors it has two additional distinct tRNA(Ile)-dependent editing activities. One activity is designated as 'pretransfer' editing and involves the hydrolysis of activated Val-AMP. The other activity is designated 'posttransfer' editing and involves deacylation of mischarged Val-tRNA(Ile). The polypeptide is Isoleucine--tRNA ligase (Cupriavidus pinatubonensis (strain JMP 134 / LMG 1197) (Cupriavidus necator (strain JMP 134))).